The chain runs to 63 residues: uncharacterized protein (63 aa).

The first 18 residues, 1-18 (MLNSEHFNLIQRALDATA), serve as a signal peptide directing secretion.

This is an uncharacterized protein from Bacillus subtilis (strain 168).